The sequence spans 214 residues: 3-isopropylmalate dehydratase small subunit (214 aa).

Belongs to the LeuD family. LeuD type 1 subfamily. Heterodimer of LeuC and LeuD.

It catalyses the reaction (2R,3S)-3-isopropylmalate = (2S)-2-isopropylmalate. It participates in amino-acid biosynthesis; L-leucine biosynthesis; L-leucine from 3-methyl-2-oxobutanoate: step 2/4. Catalyzes the isomerization between 2-isopropylmalate and 3-isopropylmalate, via the formation of 2-isopropylmaleate. This is 3-isopropylmalate dehydratase small subunit from Nitrosococcus oceani (strain ATCC 19707 / BCRC 17464 / JCM 30415 / NCIMB 11848 / C-107).